A 461-amino-acid polypeptide reads, in one-letter code: Ufm1-specific protease 2 (461 aa).

Active-site residues include Cys-294, Asp-418, and His-420.

Belongs to the peptidase C78 family.

It is found in the endoplasmic reticulum. The protein resides in the cytoplasm. Its subcellular location is the nucleus. Its function is as follows. Thiol-dependent isopeptidase that specifically cleaves UFM1, a ubiquitin-like modifier protein, from conjugated proteins, such as CD274/PD-L1, CYB5R3, DDRGK1, MRE11, RPL26/uL24, TRIP4 and RPL26/uL24. While it is also able to mediate the processing of UFM1 precursors, a prerequisite for conjugation reactions, UFSP2 mainly acts as a protein deUFMylase that mediates deconjugation of UFM1 from target proteins. Mediates deUFMylation of RPL26/uL24, a critical step to release the UFM1 ribosome E3 ligase (UREL) complex during the recycling of 60S ribosome subunits from the endoplasmic reticulum. Catalyzes deUFMylation of TRIP4, regulating intracellular nuclear receptors transactivation and thereby regulate cell proliferation and differentiation. The protein is Ufm1-specific protease 2 of Rattus norvegicus (Rat).